The following is a 541-amino-acid chain: Transcription factor STP2 (541 aa).

Positions V13 to N32 are i. Residues D35–D58 form a disordered region. Residues L73 to S105 form an II region. Residues Y204 to H226 form a C2H2-type 1 zinc finger. The C2H2-type 2; atypical zinc-finger motif lies at Y232–H267. The C2H2-type 3; atypical zinc finger occupies G284–C309. Low complexity predominate over residues S452–S462. Positions S452–S497 are disordered. A compositionally biased stretch (polar residues) spans P465 to S482.

As to quaternary structure, interacts (via Region II) with SSY5; protease component of the SPS-sensor. Post-translationally, activated by the amino acid-induced proteolytic removal of an N-terminal inhibitory domain by serine protease SSY5, an intrinsic component of the SPS-sensor. Processing requires at least 2 components of the SCF(GRR1) ubiquitin ligase complex, namely the F-box protein GRR1 and the E2 enzyme CDC34, but does not depend on the proteasome. Processing is negatively regulated by the protein phosphatase 2A regulatory subunit RTS1.

It is found in the cell membrane. The protein resides in the nucleus. Functionally, transcription factor involved in the regulation of gene expression in response to extracellular amino acid levels. Synthesized as latent cytoplasmic precursor, which, upon a signal initiated by the plasma membrane SPS (SSY1-PTR3-SSY5) amino acid sensor system, becomes proteolytically activated and relocates to the nucleus, where it induces the expression of SPS-sensor-regulated genes, including the amino-acid permeases BAP2 and BAP3. Binding to promoters is facilitated by DAL81. Involved in the repression of genes subject to nitrogen catabolite repression and genes involved in stress response. Negatively regulated by inner nuclear membrane proteins ASI1, ASI2 and ASI3, which prevent unprocessed precursor forms that escape cytoplasmic anchoring from inducing SPS-sensor-regulated genes. The chain is Transcription factor STP2 (STP2) from Saccharomyces cerevisiae (strain ATCC 204508 / S288c) (Baker's yeast).